Reading from the N-terminus, the 110-residue chain is Large ribosomal subunit protein uL22 (110 aa).

This sequence belongs to the universal ribosomal protein uL22 family. As to quaternary structure, part of the 50S ribosomal subunit.

In terms of biological role, this protein binds specifically to 23S rRNA; its binding is stimulated by other ribosomal proteins, e.g. L4, L17, and L20. It is important during the early stages of 50S assembly. It makes multiple contacts with different domains of the 23S rRNA in the assembled 50S subunit and ribosome. The globular domain of the protein is located near the polypeptide exit tunnel on the outside of the subunit, while an extended beta-hairpin is found that lines the wall of the exit tunnel in the center of the 70S ribosome. The sequence is that of Large ribosomal subunit protein uL22 from Histophilus somni (strain 2336) (Haemophilus somnus).